Reading from the N-terminus, the 349-residue chain is MSILFHAYPLARPALFAMDAETAHEVTLAQLQRAYDCGLTRKLLHAQPEAPATLMGLSLRNPVGLAAGLDKNGAHIDALGNLGFGFVEVGTVTPRAQPGNPKPRMFRLPRANALINRLGFNNQGLDAFIANVQRSQWRSQGRILGLNIGKNADTPIERAAEDYLIGLAGVYPHADYVTVNISSPNTKNLRALQGGDELSALLGQLQERRLALADQHQRHVPLAVKIAPDLSDDQIDAIAEILPRHGIDGVIATNTTLARDAVQGLPHAEEAGGVSGAPVHELSLRVIERLRSRLGDAVAIIGVGGILSGRQASEKMAAGAQAVQLYTGLIYRGPALVGECVRALAQGSR.

FMN is bound by residues 67–71 (AGLDK) and Thr-91. Lys-71 contacts substrate. 116 to 120 (NRLGF) is a substrate binding site. FMN contacts are provided by Asn-147 and Asn-180. A substrate-binding site is contributed by Asn-180. Ser-183 serves as the catalytic Nucleophile. Position 185 (Asn-185) interacts with substrate. Residues Lys-225 and Thr-253 each coordinate FMN. Residue 254–255 (NT) participates in substrate binding. Residues Gly-276, Gly-305, and 326 to 327 (YT) each bind FMN.

This sequence belongs to the dihydroorotate dehydrogenase family. Type 2 subfamily. As to quaternary structure, monomer. The cofactor is FMN.

It is found in the cell membrane. The catalysed reaction is (S)-dihydroorotate + a quinone = orotate + a quinol. Its pathway is pyrimidine metabolism; UMP biosynthesis via de novo pathway; orotate from (S)-dihydroorotate (quinone route): step 1/1. Functionally, catalyzes the conversion of dihydroorotate to orotate with quinone as electron acceptor. The polypeptide is Dihydroorotate dehydrogenase (quinone) (Bordetella pertussis (strain Tohama I / ATCC BAA-589 / NCTC 13251)).